A 166-amino-acid polypeptide reads, in one-letter code: MLELDLQIASETPAPDEARFRLWCEMGLRQRSADSELTIRLVDETEGRELNHTWRHKNYATNVLSFPADVPDDMLDIPLLGDLVICVPVVNREAAEQGKSIDAHWAHMVIHGCLHLLGYDHIDDEEAEEMEALERTLLEELGYPDPYADDESADHPHSDTPSKDHE.

Zn(2+)-binding residues include histidine 111, histidine 115, and histidine 121. Positions 141–166 (LGYPDPYADDESADHPHSDTPSKDHE) are disordered. Positions 153-166 (ADHPHSDTPSKDHE) are enriched in basic and acidic residues.

Belongs to the endoribonuclease YbeY family. Requires Zn(2+) as cofactor.

It is found in the cytoplasm. Functionally, single strand-specific metallo-endoribonuclease involved in late-stage 70S ribosome quality control and in maturation of the 3' terminus of the 16S rRNA. The protein is Endoribonuclease YbeY of Pseudomonas syringae pv. tomato (strain ATCC BAA-871 / DC3000).